Consider the following 78-residue polypeptide: Probable [Fe-S]-dependent transcriptional repressor (78 aa).

Positions 56, 61, 64, and 70 each coordinate iron-sulfur cluster.

Belongs to the FeoC family.

In terms of biological role, may function as a transcriptional regulator that controls feoABC expression. This Escherichia fergusonii (strain ATCC 35469 / DSM 13698 / CCUG 18766 / IAM 14443 / JCM 21226 / LMG 7866 / NBRC 102419 / NCTC 12128 / CDC 0568-73) protein is Probable [Fe-S]-dependent transcriptional repressor.